Reading from the N-terminus, the 1007-residue chain is Aldehyde reductase lnbA (1007 aa).

The tract at residues 35-428 is adenylation (A) domain; it reads QVRQSPSSIA…GRVDHQIKVR (394 aa). The region spanning 540 to 617 is the Carrier domain; it reads TLCQDTQTVL…ALASIIDHAK (78 aa). The residue at position 577 (serine 577) is an O-(pantetheine 4'-phosphoryl)serine. Residues 659–998 are short-chain dehydrogenase/reductase (R) domain; that stretch reads IFITGATGFV…PTLDCSLLKK (340 aa).

The protein belongs to the NRP synthetase family.

The enzyme catalyses L-tyrosinal + AMP + diphosphate + NADP(+) = L-tyrosine + ATP + NADPH + H(+). Its pathway is secondary metabolite biosynthesis. In terms of biological role, non-canonical nonribosomal peptide synthetase; part of the lnb gene cluster that mediates the biosynthesis of diastereomeric piperazines. Lna and lnb clusters encode sets of enzymes that produce overlapping sets of previously undescribed metabolites such as piperazinomycin-like metabolites or morpholine. The lna and lnb biosynthetic pathways appear to be part of a signaling network that controls the formation of sclerotia, a resilient overwintering structure. One primary function of the non-canonical nonribosomal peptide synthetases lnaA and lnbA consists in the reduction of L-tyrosine. The presence in the clusters of tailoring enzymes such as the oxidoreductases lnaB, lnbB, lnaE or lnbE, as well as of the cytochrome P450 monooxygenases lnaC, lnaD, or lnbC, might explain formation of various diastereomeric piperazines. The sequence is that of Aldehyde reductase lnbA from Aspergillus flavus (strain ATCC 200026 / FGSC A1120 / IAM 13836 / NRRL 3357 / JCM 12722 / SRRC 167).